Reading from the N-terminus, the 690-residue chain is Elongation factor G (690 aa).

A tr-type G domain is found at 8-283 (SKCRNIGIMA…AVVDFLPAPN (276 aa)). Residues 17–24 (AHIDAGKT), 81–85 (DTPGH), and 135–138 (NKMD) each bind GTP.

Belongs to the TRAFAC class translation factor GTPase superfamily. Classic translation factor GTPase family. EF-G/EF-2 subfamily.

It localises to the cytoplasm. Functionally, catalyzes the GTP-dependent ribosomal translocation step during translation elongation. During this step, the ribosome changes from the pre-translocational (PRE) to the post-translocational (POST) state as the newly formed A-site-bound peptidyl-tRNA and P-site-bound deacylated tRNA move to the P and E sites, respectively. Catalyzes the coordinated movement of the two tRNA molecules, the mRNA and conformational changes in the ribosome. This is Elongation factor G from Ehrlichia canis (strain Jake).